Here is a 91-residue protein sequence, read N- to C-terminus: Putative methyltransferase YfdM (91 aa).

This chain is Putative methyltransferase YfdM (yfdM), found in Escherichia coli (strain K12).